The following is a 258-amino-acid chain: Indole-3-glycerol phosphate synthase (258 aa).

The protein belongs to the TrpC family.

The enzyme catalyses 1-(2-carboxyphenylamino)-1-deoxy-D-ribulose 5-phosphate + H(+) = (1S,2R)-1-C-(indol-3-yl)glycerol 3-phosphate + CO2 + H2O. It participates in amino-acid biosynthesis; L-tryptophan biosynthesis; L-tryptophan from chorismate: step 4/5. This Campylobacter jejuni (strain RM1221) protein is Indole-3-glycerol phosphate synthase.